Reading from the N-terminus, the 472-residue chain is Gamma-aminobutyric acid receptor subunit beta-2 (472 aa).

A signal peptide spans 1–23 (RVRKKDYFGIWSFPLIIAAVCAQ). The Extracellular segment spans residues 24–239 (SVNDPSNMSL…LSLSFKLKRN (216 aa)). N-linked (GlcNAc...) asparagine glycans are attached at residues Asn30 and Asn102. Residue Tyr119 coordinates histamine. Cys158 and Cys172 form a disulfide bridge. Residues 178-179 (SY) and Thr224 contribute to the histamine site. 2 residues coordinate 4-aminobutanoate: Tyr179 and Thr224. 3 helical membrane passes run 240–260 (IGYF…LSWV), 271–290 (ARVA…NTHL), and 309–329 (GCFV…YIFF). The segment at 287 to 308 (NTHLRETLPKIPYVKAIDMYLM) is etomidate binding; allosteric effector. Over 330 to 450 (GRGPQRQKKA…LTDVNAIDRW (121 aa)) the chain is Cytoplasmic. Tyr401 carries the phosphotyrosine modification. A helical membrane pass occupies residues 451-471 (SRIFFPVVFSFFNIVYWLYYV).

This sequence belongs to the ligand-gated ion channel (TC 1.A.9) family. Gamma-aminobutyric acid receptor (TC 1.A.9.5) subfamily. GABRB2 sub-subfamily. In terms of assembly, heteropentamer, formed by a combination of alpha (GABRA1-6), beta (GABRB1-3), gamma (GABRG1-3), delta (GABRD), epsilon (GABRE), rho (GABRR1-3), pi (GABRP) and theta (GABRQ) chains, each subunit exhibiting distinct physiological and pharmacological properties. Interacts with UBQLN1. May interact with KIF21B. Identified in a complex of 720 kDa composed of LHFPL4, NLGN2, GABRA1, GABRB2, GABRG2 and GABRB3. Glycosylated.

It is found in the postsynaptic cell membrane. The protein resides in the cell membrane. Its subcellular location is the cytoplasmic vesicle membrane. It catalyses the reaction chloride(in) = chloride(out). Allosterically activated by benzodiazepines. Allosterically activated by the anesthetic etomidate. Inhibited by the antagonist bicuculline. Potentiated by histamine. In terms of biological role, beta subunit of the heteropentameric ligand-gated chloride channel gated by gamma-aminobutyric acid (GABA), a major inhibitory neurotransmitter in the brain. GABA-gated chloride channels, also named GABA(A) receptors (GABAAR), consist of five subunits arranged around a central pore and contain GABA active binding site(s) located at the alpha and beta subunit interface(s). When activated by GABA, GABAARs selectively allow the flow of chloride anions across the cell membrane down their electrochemical gradient. Chloride influx into the postsynaptic neuron following GABAAR opening decreases the neuron ability to generate a new action potential, thereby reducing nerve transmission. GABAARs containing alpha-1 and beta-2 or -3 subunits exhibit synaptogenic activity; the gamma-2 subunit being necessary but not sufficient to induce rapid synaptic contacts formation. Extrasynaptic beta-2 receptors contribute to the tonic GABAergic inhibition. Beta-containing GABAARs can simultaneously bind GABA and histamine where histamine binds at the interface of two neighboring beta subunits, which may be involved in the regulation of sleep and wakefulness. This is Gamma-aminobutyric acid receptor subunit beta-2 (GABRB2) from Bos taurus (Bovine).